Consider the following 86-residue polypeptide: Co-chaperonin GroES (86 aa).

The protein belongs to the GroES chaperonin family. As to quaternary structure, heptamer of 7 subunits arranged in a ring. Interacts with the chaperonin GroEL.

Its subcellular location is the cytoplasm. Functionally, together with the chaperonin GroEL, plays an essential role in assisting protein folding. The GroEL-GroES system forms a nano-cage that allows encapsulation of the non-native substrate proteins and provides a physical environment optimized to promote and accelerate protein folding. GroES binds to the apical surface of the GroEL ring, thereby capping the opening of the GroEL channel. This Campylobacter jejuni subsp. jejuni serotype O:6 (strain 81116 / NCTC 11828) protein is Co-chaperonin GroES.